Reading from the N-terminus, the 1286-residue chain is Lysine-specific demethylase JMJ705 (1286 aa).

In terms of domain architecture, JmjN spans 25-66 (APEFRPTAAEFADPVSYILKIEPAAAPYGICKVVPPLPPPPK). The interval 82 to 105 (PDDRSPSFPTRHQQVGLCPRRTRP) is disordered. One can recognise a JmjC domain in the interval 201 to 367 (ETAWNMRGVA…IAKEAAIRRA (167 aa)). Positions 244, 246, and 335 each coordinate Fe cation. The span at 641–679 (PNSSNNVGCVGTKLSSSSTERQERPSSQNAHCNGSSVIS) shows a compositional bias: polar residues. Disordered regions lie at residues 641-686 (PNSS…KGVR), 1013-1060 (AEPV…HSQE), and 1077-1164 (PAGT…PKQA). Residues 1119-1136 (HASGQKSNVQEANANSAS) are compositionally biased toward polar residues. The C2H2-type 1; degenerate zinc-finger motif lies at 1167–1189 (YSCDIEGCSMSFRTKRDLSLHKS). 3 consecutive C2H2-type zinc fingers follow at residues 1190–1214 (DICP…RKVH), 1220–1244 (LTCP…LRVH), and 1250–1276 (YVCH…KTGH).

Fe(2+) serves as cofactor. As to expression, expressed in leaves and flag leaves. Expressed at low levels in roots, shoots, stems and panicles.

The protein localises to the nucleus. It catalyses the reaction N(6),N(6),N(6)-trimethyl-L-lysyl(27)-[histone H3] + 2 2-oxoglutarate + 2 O2 = N(6)-methyl-L-lysyl(27)-[histone H3] + 2 formaldehyde + 2 succinate + 2 CO2. Functionally, histone demethylase that demethylates 'Lys-27' (H3K27me) of histone H3 with a specific activity for H3K27me3 and H3K27me2. No activity on H3K4me3, H3K9me3, H3K27me1 and H3K36me3. Involved in biotic stress response. May demethylate H3K27me3-marked defense-related genes and increase their basal and induced expression levels during pathogen infection. This chain is Lysine-specific demethylase JMJ705 (JMJ705), found in Oryza sativa subsp. japonica (Rice).